A 189-amino-acid polypeptide reads, in one-letter code: Nuclear distribution protein nudE homolog 1 (189 aa).

Residues 4–121 adopt a coiled-coil conformation; the sequence is NLDLETAIQI…LRVSKEEATS (118 aa). Positions 114–126 are enriched in basic and acidic residues; the sequence is VSKEEATSGETRR. The tract at residues 114-139 is disordered; the sequence is VSKEEATSGETRRNTRSLPSQNKKMK.

It belongs to the nudE family. Self-associates. Interacts with PAC1.

Its subcellular location is the nucleus. It is found in the cytoplasm. The protein resides in the cytoskeleton. In terms of biological role, required for nuclear migration to the bud neck during cell division. Targets cytoplasmic dynein to microtubule plus ends thereby promoting dynein-mediated microtubule sliding along the bud cortex and consequently the movement of the mitotic spindle to the bud neck. The chain is Nuclear distribution protein nudE homolog 1 (NDL1) from Saccharomyces cerevisiae (strain ATCC 204508 / S288c) (Baker's yeast).